A 249-amino-acid chain; its full sequence is tRNA (guanine-N(1)-)-methyltransferase (249 aa).

S-adenosyl-L-methionine-binding positions include Gly113 and 133 to 138 (IGDFVV).

It belongs to the RNA methyltransferase TrmD family. Homodimer.

The protein resides in the cytoplasm. It catalyses the reaction guanosine(37) in tRNA + S-adenosyl-L-methionine = N(1)-methylguanosine(37) in tRNA + S-adenosyl-L-homocysteine + H(+). Specifically methylates guanosine-37 in various tRNAs. This chain is tRNA (guanine-N(1)-)-methyltransferase, found in Neisseria meningitidis serogroup C (strain 053442).